Reading from the N-terminus, the 277-residue chain is Phosphatidylglycerol--prolipoprotein diacylglyceryl transferase (277 aa).

3 consecutive transmembrane segments (helical) span residues 16-36, 62-82, and 101-121; these read FFQI…FYFL, LLFF…VLFY, and GMAF…FAHL. Residue arginine 145 participates in a 1,2-diacyl-sn-glycero-3-phospho-(1'-sn-glycerol) binding. A run of 2 helical transmembrane segments spans residues 214 to 234 and 243 to 263; these read PIWG…RFIA and FLGL…PMIV.

Belongs to the Lgt family.

It is found in the cell inner membrane. The enzyme catalyses L-cysteinyl-[prolipoprotein] + a 1,2-diacyl-sn-glycero-3-phospho-(1'-sn-glycerol) = an S-1,2-diacyl-sn-glyceryl-L-cysteinyl-[prolipoprotein] + sn-glycerol 1-phosphate + H(+). The protein operates within protein modification; lipoprotein biosynthesis (diacylglyceryl transfer). Functionally, catalyzes the transfer of the diacylglyceryl group from phosphatidylglycerol to the sulfhydryl group of the N-terminal cysteine of a prolipoprotein, the first step in the formation of mature lipoproteins. This chain is Phosphatidylglycerol--prolipoprotein diacylglyceryl transferase, found in Leptothrix cholodnii (strain ATCC 51168 / LMG 8142 / SP-6) (Leptothrix discophora (strain SP-6)).